Consider the following 273-residue polypeptide: Outer surface protein A (273 aa).

The N-terminal stretch at 1-16 (MKKYLLGIGLILALIA) is a signal peptide. Residue C17 is the site of N-palmitoyl cysteine attachment. C17 carries S-diacylglycerol cysteine lipidation.

The protein belongs to the OspA lipoprotein family.

It is found in the cell outer membrane. The protein resides in the cell surface. Functionally, induces host (human and mouse) cytokine release by monocyte cell lines via TLR2 and CD14; nonlipidated protein does not stimulate host cells. This chain is Outer surface protein A, found in Borreliella burgdorferi (strain ATCC 35210 / DSM 4680 / CIP 102532 / B31) (Borrelia burgdorferi).